Reading from the N-terminus, the 333-residue chain is Transaldolase (333 aa).

The active-site Schiff-base intermediate with substrate is Lys135.

The protein belongs to the transaldolase family. Type 1 subfamily. As to quaternary structure, homodimer.

It localises to the cytoplasm. It catalyses the reaction D-sedoheptulose 7-phosphate + D-glyceraldehyde 3-phosphate = D-erythrose 4-phosphate + beta-D-fructose 6-phosphate. It participates in carbohydrate degradation; pentose phosphate pathway; D-glyceraldehyde 3-phosphate and beta-D-fructose 6-phosphate from D-ribose 5-phosphate and D-xylulose 5-phosphate (non-oxidative stage): step 2/3. In terms of biological role, transaldolase is important for the balance of metabolites in the pentose-phosphate pathway. This chain is Transaldolase, found in Prochlorococcus marinus (strain MIT 9312).